Reading from the N-terminus, the 300-residue chain is Acetylglutamate kinase (300 aa).

Residues 73–74 (GG), Arg-95, and Asn-197 each bind substrate.

The protein belongs to the acetylglutamate kinase family. ArgB subfamily.

Its subcellular location is the cytoplasm. It carries out the reaction N-acetyl-L-glutamate + ATP = N-acetyl-L-glutamyl 5-phosphate + ADP. It participates in amino-acid biosynthesis; L-arginine biosynthesis; N(2)-acetyl-L-ornithine from L-glutamate: step 2/4. In terms of biological role, catalyzes the ATP-dependent phosphorylation of N-acetyl-L-glutamate. The sequence is that of Acetylglutamate kinase from Polynucleobacter necessarius subsp. necessarius (strain STIR1).